A 119-amino-acid chain; its full sequence is Aspartate 1-decarboxylase (119 aa).

Catalysis depends on Ser25, which acts as the Schiff-base intermediate with substrate; via pyruvic acid. The residue at position 25 (Ser25) is a Pyruvic acid (Ser). Residue Thr57 participates in substrate binding. The active-site Proton donor is Tyr58. 73 to 75 (GAA) serves as a coordination point for substrate.

The protein belongs to the PanD family. As to quaternary structure, heterooctamer of four alpha and four beta subunits. The cofactor is pyruvate. In terms of processing, is synthesized initially as an inactive proenzyme, which is activated by self-cleavage at a specific serine bond to produce a beta-subunit with a hydroxyl group at its C-terminus and an alpha-subunit with a pyruvoyl group at its N-terminus.

It localises to the cytoplasm. The enzyme catalyses L-aspartate + H(+) = beta-alanine + CO2. It participates in cofactor biosynthesis; (R)-pantothenate biosynthesis; beta-alanine from L-aspartate: step 1/1. Functionally, catalyzes the pyruvoyl-dependent decarboxylation of aspartate to produce beta-alanine. The protein is Aspartate 1-decarboxylase of Herminiimonas arsenicoxydans.